The sequence spans 148 residues: Male-specific protein scotti (148 aa).

The tract at residues 56-78 (PQEPPLGVFPAQGGPNGPPRLRK) is disordered. Residue Asn-129 is glycosylated (N-linked (GlcNAc...) asparagine).

Belongs to the male-specific scotti family.

In terms of biological role, post-meiotically transcribed gene that has a role in late spermiogenesis; required for actin cone progression during spermatid individualization. This chain is Male-specific protein scotti, found in Drosophila sechellia (Fruit fly).